The following is a 249-amino-acid chain: Triosephosphate isomerase (249 aa).

Residue 9–11 participates in substrate binding; the sequence is NWK. The active-site Electrophile is the histidine 94. Catalysis depends on glutamate 166, which acts as the Proton acceptor. Substrate is bound by residues glycine 172 and 232-233; that span reads GG.

The protein belongs to the triosephosphate isomerase family. As to quaternary structure, homodimer.

It is found in the cytoplasm. It catalyses the reaction D-glyceraldehyde 3-phosphate = dihydroxyacetone phosphate. The protein operates within carbohydrate biosynthesis; gluconeogenesis. Its pathway is carbohydrate degradation; glycolysis; D-glyceraldehyde 3-phosphate from glycerone phosphate: step 1/1. Its function is as follows. Involved in the gluconeogenesis. Catalyzes stereospecifically the conversion of dihydroxyacetone phosphate (DHAP) to D-glyceraldehyde-3-phosphate (G3P). The chain is Triosephosphate isomerase from Xylella fastidiosa (strain M23).